The primary structure comprises 182 residues: Histone deacetylase complex subunit SAP30L (182 aa).

Methionine 1 bears the N-acetylmethionine mark. Residues 1 to 10 (MNGFSTEEDS) show a composition bias toward acidic residues. Residues 1-22 (MNGFSTEEDSREGPPAAPAAAP) are disordered. Cystine bridges form between cysteine 28-cysteine 29 and cysteine 37-cysteine 73. Residues 28 to 76 (CCLIADGERCVRPAGNASFSKRVQKSISQKKLKLDIDKSVRHLYICDFH) form an Atypical zinc finger. Residue lysine 48 forms a Glycyl lysine isopeptide (Lys-Gly) (interchain with G-Cter in SUMO2) linkage. Positions 84–103 (RNKRKRKASDDGGDSPEHDA) are disordered. Positions 85–90 (NKRKRK) match the Nuclear localization signal (NLS) motif. Residues 87–89 (RKR) are important for DNA and phosphoinositide binding. Serine 92 and serine 98 each carry phosphoserine. Residues lysine 154, lysine 165, and lysine 174 each participate in a glycyl lysine isopeptide (Lys-Gly) (interchain with G-Cter in SUMO2) cross-link.

This sequence belongs to the SAP30 family. In terms of assembly, interacts with components of the histone deacetylase complex SIN3A, HDAC1 and HDAC2. Binds histones and nucleosomes. Interacts with FEZ1.

It localises to the nucleus. The protein localises to the nucleolus. Its function is as follows. Functions as a transcription repressor, probably via its interaction with histone deacetylase complexes. Involved in the functional recruitment of the class 1 Sin3-histone deacetylase complex (HDAC) to the nucleolus. Binds DNA, apparently without sequence-specificity, and bends bound double-stranded DNA. Binds phosphoinositol phosphates (phosphoinositol 3-phosphate, phosphoinositol 4-phosphate and phosphoinositol 5-phosphate) via the same basic sequence motif that mediates DNA binding and nuclear import. The chain is Histone deacetylase complex subunit SAP30L (Sap30l) from Mus musculus (Mouse).